The primary structure comprises 78 residues: MALPKIEEVRQLSDEELAEEIIATKRELFDLRFQQATRQLENTHEFKHTRHRMAQLLTIERERQLNINQSSSTSAEEA.

Belongs to the universal ribosomal protein uL29 family.

This Crocosphaera subtropica (strain ATCC 51142 / BH68) (Cyanothece sp. (strain ATCC 51142)) protein is Large ribosomal subunit protein uL29.